The following is a 23-amino-acid chain: U1-ctenitoxin-Co1a (23 aa).

Residues Cys10 and Cys20 are joined by a disulfide bond.

As to expression, expressed by the venom gland.

It localises to the secreted. Its function is as follows. Insecticidal neurotoxin that reversibly inhibits the N-methyl-D-aspartate (NMDA)-subtype of ionotropic glutamate receptor (GRIN) and inhibits inactivation of insect sodium channels (Nav). In vivo, is highly toxic to insects. The chain is U1-ctenitoxin-Co1a from Ctenus ornatus (Brazilian spider).